Consider the following 200-residue polypeptide: Recombination protein RecR (200 aa).

The C4-type zinc-finger motif lies at 57–72 (CRSCRTLTEEELCPQC). Residues 80–175 (TLLCVVEGPT…VASRIAHGVP (96 aa)) form the Toprim domain.

The protein belongs to the RecR family.

Functionally, may play a role in DNA repair. It seems to be involved in an RecBC-independent recombinational process of DNA repair. It may act with RecF and RecO. The sequence is that of Recombination protein RecR from Pseudomonas savastanoi pv. phaseolicola (strain 1448A / Race 6) (Pseudomonas syringae pv. phaseolicola (strain 1448A / Race 6)).